We begin with the raw amino-acid sequence, 356 residues long: Rhomboid-related protein 1 (356 aa).

7 helical membrane-spanning segments follow: residues 107-129 (WCPPPIFMLLITIIQVGIFFFYW), 172-194 (YMFLHAGLNHLLGNVIIQLLVGI), 201-223 (KIWRIGPIYLLAVTSGSLLQYAI), 227-249 (SLLVGASAGVYALIFAHVANVIL), 256-275 (LRWIRVLVLFVFIFLDFGGA), 290-312 (HLAHIAGAVTGLFFGYVVLYNVV), and 319-341 (IIRYVCLFLYSAFFATTIIFVIV). The active-site Nucleophile is the Ser-233. Residue His-293 is part of the active site.

This sequence belongs to the peptidase S54 family.

It localises to the membrane. It catalyses the reaction Cleaves type-1 transmembrane domains using a catalytic dyad composed of serine and histidine that are contributed by different transmembrane domains.. In terms of biological role, serine protease which activates lin-3 isoform a in the proximal vulva precursor cells (VPC) during vulva development to transmit the inductive anchor cell signal to the distal VPCs. In Caenorhabditis elegans, this protein is Rhomboid-related protein 1.